The chain runs to 140 residues: Probable transport accessory protein MmpS4 (140 aa).

The chain crosses the membrane as a helical span at residues 2-22 (LMRTWIPLVILVVVIVGGFTV).

Belongs to the MmpS family.

The protein resides in the cell membrane. In Mycobacterium bovis (strain ATCC BAA-935 / AF2122/97), this protein is Probable transport accessory protein MmpS4 (mmpS4).